The sequence spans 541 residues: Membrane protein insertase YidC (541 aa).

5 helical membrane passes run 6 to 26 (NILLIGLLFVSFLLWQQWQAD), 349 to 369 (FVGNWGVAIILITLTVRGLLF), 420 to 440 (GGCLPILLQMPIFIALYWVLL), 457 to 477 (LSVQDPYYILPLLMGVSMFVM), and 500 to 520 (VIFTVFFLWFPSGLVLYWLVG).

This sequence belongs to the OXA1/ALB3/YidC family. Type 1 subfamily. As to quaternary structure, interacts with the Sec translocase complex via SecD. Specifically interacts with transmembrane segments of nascent integral membrane proteins during membrane integration.

Its subcellular location is the cell inner membrane. Required for the insertion and/or proper folding and/or complex formation of integral membrane proteins into the membrane. Involved in integration of membrane proteins that insert both dependently and independently of the Sec translocase complex, as well as at least some lipoproteins. Aids folding of multispanning membrane proteins. The chain is Membrane protein insertase YidC from Shewanella sp. (strain MR-7).